Here is a 323-residue protein sequence, read N- to C-terminus: GTP 3',8-cyclase (323 aa).

A Radical SAM core domain is found at 4–233; sequence KYGREIDYLR…NGPAKYISIE (230 aa). Arg13 lines the GTP pocket. Residues Cys20 and Cys24 each coordinate [4Fe-4S] cluster. S-adenosyl-L-methionine is bound at residue Tyr26. A [4Fe-4S] cluster-binding site is contributed by Cys27. Residue Arg63 coordinates GTP. Residue Gly67 participates in S-adenosyl-L-methionine binding. Thr94 is a binding site for GTP. Ser118 lines the S-adenosyl-L-methionine pocket. Lys154 serves as a coordination point for GTP. S-adenosyl-L-methionine is bound at residue Met188. Residues Cys250 and Cys253 each coordinate [4Fe-4S] cluster. Residue 255–257 participates in GTP binding; it reads RIR. A [4Fe-4S] cluster-binding site is contributed by Cys267.

It belongs to the radical SAM superfamily. MoaA family. In terms of assembly, monomer and homodimer. It depends on [4Fe-4S] cluster as a cofactor.

It catalyses the reaction GTP + AH2 + S-adenosyl-L-methionine = (8S)-3',8-cyclo-7,8-dihydroguanosine 5'-triphosphate + 5'-deoxyadenosine + L-methionine + A + H(+). Its pathway is cofactor biosynthesis; molybdopterin biosynthesis. Catalyzes the cyclization of GTP to (8S)-3',8-cyclo-7,8-dihydroguanosine 5'-triphosphate. The protein is GTP 3',8-cyclase of Clostridium perfringens (strain 13 / Type A).